A 452-amino-acid chain; its full sequence is Pup--protein ligase (452 aa).

Residue Glu-9 coordinates Mg(2+). Residue Arg-53 participates in ATP binding. Residue Tyr-55 participates in Mg(2+) binding. Asp-57 functions as the Proton acceptor in the catalytic mechanism. Glu-63 is a binding site for Mg(2+). ATP-binding residues include Thr-66 and Trp-419.

This sequence belongs to the Pup ligase/Pup deamidase family. Pup-conjugating enzyme subfamily.

The catalysed reaction is ATP + [prokaryotic ubiquitin-like protein]-L-glutamate + [protein]-L-lysine = ADP + phosphate + N(6)-([prokaryotic ubiquitin-like protein]-gamma-L-glutamyl)-[protein]-L-lysine.. The protein operates within protein degradation; proteasomal Pup-dependent pathway. It participates in protein modification; protein pupylation. Functionally, catalyzes the covalent attachment of the prokaryotic ubiquitin-like protein modifier Pup to the proteasomal substrate proteins, thereby targeting them for proteasomal degradation. This tagging system is termed pupylation. The ligation reaction involves the side-chain carboxylate of the C-terminal glutamate of Pup and the side-chain amino group of a substrate lysine. The chain is Pup--protein ligase from Frankia alni (strain DSM 45986 / CECT 9034 / ACN14a).